Consider the following 259-residue polypeptide: tRNA (guanine-N(7)-)-methyltransferase (259 aa).

A compositionally biased stretch (basic and acidic residues) spans 1 to 11 (MSNTDNSDKNT). A disordered region spans residues 1-29 (MSNTDNSDKNTKPTGYRPPQTDFNTEFGN). S-adenosyl-L-methionine-binding residues include glutamate 89, glutamate 114, aspartate 141, and aspartate 164. Aspartate 164 is an active-site residue. Substrate contacts are provided by residues lysine 168, aspartate 200, and 238 to 241 (TKFE).

This sequence belongs to the class I-like SAM-binding methyltransferase superfamily. TrmB family.

It catalyses the reaction guanosine(46) in tRNA + S-adenosyl-L-methionine = N(7)-methylguanosine(46) in tRNA + S-adenosyl-L-homocysteine. Its pathway is tRNA modification; N(7)-methylguanine-tRNA biosynthesis. Its function is as follows. Catalyzes the formation of N(7)-methylguanine at position 46 (m7G46) in tRNA. This chain is tRNA (guanine-N(7)-)-methyltransferase, found in Corynebacterium diphtheriae (strain ATCC 700971 / NCTC 13129 / Biotype gravis).